Reading from the N-terminus, the 318-residue chain is Glutathione synthetase (318 aa).

The 186-residue stretch at 128–313 folds into the ATP-grasp domain; the sequence is KLAILNFSRF…VAAMFADAVA (186 aa). ATP is bound at residue 154 to 210; that stretch reads LKEHGDIIIKPLDGMGGMGIFRLTEKDPNIGSILETLMQLDSRTIMAQRYIPEIVHG. 2 residues coordinate Mg(2+): E284 and N286.

The protein belongs to the prokaryotic GSH synthase family. The cofactor is Mg(2+). Mn(2+) serves as cofactor.

The enzyme catalyses gamma-L-glutamyl-L-cysteine + glycine + ATP = glutathione + ADP + phosphate + H(+). Its pathway is sulfur metabolism; glutathione biosynthesis; glutathione from L-cysteine and L-glutamate: step 2/2. This chain is Glutathione synthetase, found in Neisseria meningitidis serogroup A / serotype 4A (strain DSM 15465 / Z2491).